Here is a 180-residue protein sequence, read N- to C-terminus: PRA1 family protein F1 (180 aa).

Transmembrane regions (helical) follow at residues 63 to 83, 84 to 104, 123 to 143, and 145 to 165; these read ANTVYFQTNYTIVVLFSVFLS, LIWNPFSLLVLLALLGAWLFL, IVLIIMSVITLSILFLTDAKL, and IAVAIVAGALAVLSHAAVRKT.

This sequence belongs to the PRA1 family. Interacts with PRA1F2. In terms of tissue distribution, expressed in hypocotyls, leaf bases and shoot apex.

It is found in the endosome membrane. Functionally, may be involved in both secretory and endocytic intracellular trafficking in the endosomal/prevacuolar compartments. This Arabidopsis thaliana (Mouse-ear cress) protein is PRA1 family protein F1 (PRA1F1).